Here is a 271-residue protein sequence, read N- to C-terminus: Formamidopyrimidine-DNA glycosylase (271 aa).

P2 (schiff-base intermediate with DNA) is an active-site residue. Residue E3 is the Proton donor of the active site. K58 functions as the Proton donor; for beta-elimination activity in the catalytic mechanism. Residues H92, R111, and R152 each contribute to the DNA site. Residues 237–271 (FVYGRQQQPCKQCGSLLRQTTIRQRTTVWCGHCQG) form an FPG-type zinc finger. R261 acts as the Proton donor; for delta-elimination activity in catalysis.

The protein belongs to the FPG family. As to quaternary structure, monomer. Requires Zn(2+) as cofactor.

The catalysed reaction is Hydrolysis of DNA containing ring-opened 7-methylguanine residues, releasing 2,6-diamino-4-hydroxy-5-(N-methyl)formamidopyrimidine.. It carries out the reaction 2'-deoxyribonucleotide-(2'-deoxyribose 5'-phosphate)-2'-deoxyribonucleotide-DNA = a 3'-end 2'-deoxyribonucleotide-(2,3-dehydro-2,3-deoxyribose 5'-phosphate)-DNA + a 5'-end 5'-phospho-2'-deoxyribonucleoside-DNA + H(+). Functionally, involved in base excision repair of DNA damaged by oxidation or by mutagenic agents. Acts as a DNA glycosylase that recognizes and removes damaged bases. Has a preference for oxidized purines, such as 7,8-dihydro-8-oxoguanine (8-oxoG). Has AP (apurinic/apyrimidinic) lyase activity and introduces nicks in the DNA strand. Cleaves the DNA backbone by beta-delta elimination to generate a single-strand break at the site of the removed base with both 3'- and 5'-phosphates. The polypeptide is Formamidopyrimidine-DNA glycosylase (mutM1) (Xylella fastidiosa (strain 9a5c)).